The following is a 347-amino-acid chain: Heat-inducible transcription repressor HrcA (347 aa).

It belongs to the HrcA family.

In terms of biological role, negative regulator of class I heat shock genes (grpE-dnaK-dnaJ and groELS operons). Prevents heat-shock induction of these operons. The protein is Heat-inducible transcription repressor HrcA of Lactococcus lactis subsp. cremoris (strain MG1363).